A 238-amino-acid polypeptide reads, in one-letter code: Uridylate kinase (238 aa).

Position 12–15 (12–15 (KLSG)) interacts with ATP. The tract at residues 20 to 25 (GQQGFG) is involved in allosteric activation by GTP. Gly54 contributes to the UMP binding site. ATP is bound by residues Gly55 and Arg59. UMP is bound by residues Asp74 and 135 to 142 (TGNPFFTT). Thr162, Asn163, Tyr168, and Asp171 together coordinate ATP.

It belongs to the UMP kinase family. Homohexamer.

It is found in the cytoplasm. It carries out the reaction UMP + ATP = UDP + ADP. The protein operates within pyrimidine metabolism; CTP biosynthesis via de novo pathway; UDP from UMP (UMPK route): step 1/1. Its activity is regulated as follows. Allosterically activated by GTP. Inhibited by UTP. Functionally, catalyzes the reversible phosphorylation of UMP to UDP. The chain is Uridylate kinase from Bradyrhizobium diazoefficiens (strain JCM 10833 / BCRC 13528 / IAM 13628 / NBRC 14792 / USDA 110).